The primary structure comprises 204 residues: N-(5'-phosphoribosyl)anthranilate isomerase (204 aa).

Belongs to the TrpF family.

The catalysed reaction is N-(5-phospho-beta-D-ribosyl)anthranilate = 1-(2-carboxyphenylamino)-1-deoxy-D-ribulose 5-phosphate. It functions in the pathway amino-acid biosynthesis; L-tryptophan biosynthesis; L-tryptophan from chorismate: step 3/5. The polypeptide is N-(5'-phosphoribosyl)anthranilate isomerase (Bacillus cereus (strain Q1)).